A 307-amino-acid polypeptide reads, in one-letter code: Glutaminase (307 aa).

Substrate contacts are provided by Ser66, Asn116, Glu160, Asn167, Tyr191, Tyr243, and Val261.

The protein belongs to the glutaminase family. In terms of assembly, homotetramer.

It catalyses the reaction L-glutamine + H2O = L-glutamate + NH4(+). The protein is Glutaminase of Saccharophagus degradans (strain 2-40 / ATCC 43961 / DSM 17024).